The following is a 332-amino-acid chain: L-lactate dehydrogenase (332 aa).

Residues 29 to 57 and Arg99 each bind NAD(+); that span reads GQVG…CADK. 3 residues coordinate substrate: Arg106, Asn138, and Arg169. Asn138 contributes to the NAD(+) binding site. The Proton acceptor role is filled by His193. Thr248 provides a ligand contact to substrate.

This sequence belongs to the LDH/MDH superfamily. LDH family. Homotetramer.

It localises to the cytoplasm. The enzyme catalyses (S)-lactate + NAD(+) = pyruvate + NADH + H(+). It functions in the pathway fermentation; pyruvate fermentation to lactate; (S)-lactate from pyruvate: step 1/1. The chain is L-lactate dehydrogenase from Drosophila melanogaster (Fruit fly).